The following is a 248-amino-acid chain: Granzyme-like protein 2 (248 aa).

The N-terminal stretch at 1–18 (MFLFLIFLVAVLPVNTEG) is a signal peptide. The propeptide at 19 to 20 (GE) is activation peptide. Residues 21-243 (IVWGTESKPH…FIPWIQKTMK (223 aa)) enclose the Peptidase S1 domain. Residues Cys50 and Cys66 are joined by a disulfide bond. Residues His65 and Asp108 each act as charge relay system in the active site. 2 disulfides stabilise this stretch: Cys142/Cys207 and Cys172/Cys186. 2 N-linked (GlcNAc...) asparagine glycosylation sites follow: Asn152 and Asn180. The Charge relay system role is filled by Ser201.

The protein belongs to the peptidase S1 family. Granzyme subfamily. In terms of tissue distribution, duodenum, lung and spleen.

This enzyme is necessary for target cell lysis in cell-mediated immune responses. The sequence is that of Granzyme-like protein 2 from Rattus norvegicus (Rat).